The sequence spans 889 residues: DNA mismatch repair protein MutS (889 aa).

A compositionally biased stretch (low complexity) spans 1–17 (MPKTNSSAASTNANPSS). The interval 1 to 20 (MPKTNSSAASTNANPSSLQQ) is disordered. An ATP-binding site is contributed by 640–647 (GPNMGGKS).

Belongs to the DNA mismatch repair MutS family.

Functionally, this protein is involved in the repair of mismatches in DNA. It is possible that it carries out the mismatch recognition step. This protein has a weak ATPase activity. The polypeptide is DNA mismatch repair protein MutS (Pseudoalteromonas atlantica (strain T6c / ATCC BAA-1087)).